The following is a 91-amino-acid chain: MAHKKGVGSSKNGRDSNPKYLGVKKFGGEVVKAGNILVRQRGTKFKAGQGVGMGRDHTLFALSDGKVVFINKGKGARFISIEAAQTEVAAD.

It belongs to the bacterial ribosomal protein bL27 family. As to quaternary structure, part of the 50S ribosomal subunit. Contacts protein L18.

Its function is as follows. Binds the 5S and 23S rRNAs and also the tRNA in the P site. This is Large ribosomal subunit protein bL27 (rpmA) from Deinococcus radiodurans (strain ATCC 13939 / DSM 20539 / JCM 16871 / CCUG 27074 / LMG 4051 / NBRC 15346 / NCIMB 9279 / VKM B-1422 / R1).